A 265-amino-acid chain; its full sequence is Translation initiation factor 2 subunit alpha (265 aa).

Residues 12 to 82 form the S1 motif domain; the sequence is GELVIGTVKK…KMRVVEVSLK (71 aa).

This sequence belongs to the eIF-2-alpha family. In terms of assembly, heterotrimer composed of an alpha, a beta and a gamma chain.

EIF-2 functions in the early steps of protein synthesis by forming a ternary complex with GTP and initiator tRNA. This chain is Translation initiation factor 2 subunit alpha, found in Pyrobaculum aerophilum (strain ATCC 51768 / DSM 7523 / JCM 9630 / CIP 104966 / NBRC 100827 / IM2).